A 428-amino-acid chain; its full sequence is 3-phosphoshikimate 1-carboxyvinyltransferase (428 aa).

Positions 21, 22, and 26 each coordinate 3-phosphoshikimate. K21 serves as a coordination point for phosphoenolpyruvate. Phosphoenolpyruvate contacts are provided by G91 and R119. Residues S164, Q166, D313, and K340 each contribute to the 3-phosphoshikimate site. Q166 provides a ligand contact to phosphoenolpyruvate. The Proton acceptor role is filled by D313. Residues R344 and R386 each contribute to the phosphoenolpyruvate site.

Belongs to the EPSP synthase family. As to quaternary structure, monomer.

It is found in the cytoplasm. The enzyme catalyses 3-phosphoshikimate + phosphoenolpyruvate = 5-O-(1-carboxyvinyl)-3-phosphoshikimate + phosphate. It participates in metabolic intermediate biosynthesis; chorismate biosynthesis; chorismate from D-erythrose 4-phosphate and phosphoenolpyruvate: step 6/7. Catalyzes the transfer of the enolpyruvyl moiety of phosphoenolpyruvate (PEP) to the 5-hydroxyl of shikimate-3-phosphate (S3P) to produce enolpyruvyl shikimate-3-phosphate and inorganic phosphate. In Campylobacter jejuni subsp. doylei (strain ATCC BAA-1458 / RM4099 / 269.97), this protein is 3-phosphoshikimate 1-carboxyvinyltransferase.